We begin with the raw amino-acid sequence, 143 residues long: SsrA-binding protein (143 aa).

This sequence belongs to the SmpB family.

It is found in the cytoplasm. Required for rescue of stalled ribosomes mediated by trans-translation. Binds to transfer-messenger RNA (tmRNA), required for stable association of tmRNA with ribosomes. tmRNA and SmpB together mimic tRNA shape, replacing the anticodon stem-loop with SmpB. tmRNA is encoded by the ssrA gene; the 2 termini fold to resemble tRNA(Ala) and it encodes a 'tag peptide', a short internal open reading frame. During trans-translation Ala-aminoacylated tmRNA acts like a tRNA, entering the A-site of stalled ribosomes, displacing the stalled mRNA. The ribosome then switches to translate the ORF on the tmRNA; the nascent peptide is terminated with the 'tag peptide' encoded by the tmRNA and targeted for degradation. The ribosome is freed to recommence translation, which seems to be the essential function of trans-translation. This chain is SsrA-binding protein, found in Deinococcus radiodurans (strain ATCC 13939 / DSM 20539 / JCM 16871 / CCUG 27074 / LMG 4051 / NBRC 15346 / NCIMB 9279 / VKM B-1422 / R1).